We begin with the raw amino-acid sequence, 480 residues long: Aspartyl/glutamyl-tRNA(Asn/Gln) amidotransferase subunit B (480 aa).

It belongs to the GatB/GatE family. GatB subfamily. Heterotrimer of A, B and C subunits.

The catalysed reaction is L-glutamyl-tRNA(Gln) + L-glutamine + ATP + H2O = L-glutaminyl-tRNA(Gln) + L-glutamate + ADP + phosphate + H(+). The enzyme catalyses L-aspartyl-tRNA(Asn) + L-glutamine + ATP + H2O = L-asparaginyl-tRNA(Asn) + L-glutamate + ADP + phosphate + 2 H(+). In terms of biological role, allows the formation of correctly charged Asn-tRNA(Asn) or Gln-tRNA(Gln) through the transamidation of misacylated Asp-tRNA(Asn) or Glu-tRNA(Gln) in organisms which lack either or both of asparaginyl-tRNA or glutaminyl-tRNA synthetases. The reaction takes place in the presence of glutamine and ATP through an activated phospho-Asp-tRNA(Asn) or phospho-Glu-tRNA(Gln). This chain is Aspartyl/glutamyl-tRNA(Asn/Gln) amidotransferase subunit B, found in Streptococcus pneumoniae (strain CGSP14).